The sequence spans 332 residues: Beta-1,3-N-acetylglucosaminyltransferase radical fringe (332 aa).

Over 1–6 the chain is Cytoplasmic; the sequence is MSRARR. The chain crosses the membrane as a helical; Signal-anchor for type II membrane protein span at residues 7–29; that stretch reads VLCRACLALAAVLAVLLLLPLPL. Topologically, residues 30-332 are lumenal; it reads PLPLPRAPAP…MKNRVEGAFQ (303 aa). Arg-75 is a binding site for substrate. N-linked (GlcNAc...) asparagine glycosylation is present at Asn-114. Cystine bridges form between Cys-115/Cys-126 and Cys-144/Cys-208. Asp-148 lines the substrate pocket. A Mn(2+)-binding site is contributed by Asp-149. Residue Asp-238 is part of the active site. Position 262 (His-262) interacts with Mn(2+). Cys-312 and Cys-321 form a disulfide bridge.

Belongs to the glycosyltransferase 31 family. Requires Mn(2+) as cofactor. In terms of tissue distribution, detected in all the examined tissues (12.5 dpc). High expression found in adult brain.

It is found in the golgi apparatus membrane. It catalyses the reaction 3-O-(alpha-L-fucosyl)-L-threonyl-[EGF-like domain protein] + UDP-N-acetyl-alpha-D-glucosamine = 3-O-(N-acetyl-beta-D-glucosaminyl-(1-&gt;3)-alpha-L-fucosyl)-L-threonyl-[EGF-like domain protein] + UDP + H(+). The catalysed reaction is 3-O-(alpha-L-fucosyl)-L-seryl-[EGF-like domain protein] + UDP-N-acetyl-alpha-D-glucosamine = 3-O-(N-acetyl-beta-D-glucosaminyl-(1-&gt;3)-alpha-L-fucosyl)-L-seryl-[EGF-like domain protein] + UDP + H(+). In terms of biological role, glycosyltransferase that initiates the elongation of O-linked fucose residues attached to EGF-like repeats in the extracellular domain of Notch molecules. Modulates NOTCH1 activity by modifying O-fucose residues at specific EGF-like domains resulting in enhancement of NOTCH1 activation by DLL1 and JAG1. May be involved in limb formation and in neurogenesis. The chain is Beta-1,3-N-acetylglucosaminyltransferase radical fringe from Mus musculus (Mouse).